We begin with the raw amino-acid sequence, 57 residues long: Small ribosomal subunit protein eS31 (57 aa).

4 residues coordinate Zn(2+): Cys29, Cys32, Cys47, and Cys50. A C4-type zinc finger spans residues 29–50 (CSRCGKGTYMSEHKDRNTCGKC).

Belongs to the eukaryotic ribosomal protein eS31 family. As to quaternary structure, part of the 30S ribosomal subunit. It depends on Zn(2+) as a cofactor.

This chain is Small ribosomal subunit protein eS31, found in Nitrosopumilus maritimus (strain SCM1).